Reading from the N-terminus, the 199-residue chain is NAD(P)H dehydrogenase (quinone) (199 aa).

One can recognise a Flavodoxin-like domain in the interval 4–190 (ILVLYYSMYG…TIARYQGEHV (187 aa)). FMN is bound by residues 10-15 (SMYGHI) and 79-81 (TRF). Tyr-12 provides a ligand contact to NAD(+). Residue Trp-99 coordinates substrate. FMN-binding positions include 114–119 (STGTGG) and His-134.

This sequence belongs to the WrbA family. Requires FMN as cofactor.

It carries out the reaction a quinone + NADH + H(+) = a quinol + NAD(+). The enzyme catalyses a quinone + NADPH + H(+) = a quinol + NADP(+). The sequence is that of NAD(P)H dehydrogenase (quinone) from Serratia proteamaculans (strain 568).